We begin with the raw amino-acid sequence, 228 residues long: 2-C-methyl-D-erythritol 4-phosphate cytidylyltransferase (228 aa).

Belongs to the IspD/TarI cytidylyltransferase family. IspD subfamily.

It carries out the reaction 2-C-methyl-D-erythritol 4-phosphate + CTP + H(+) = 4-CDP-2-C-methyl-D-erythritol + diphosphate. It functions in the pathway isoprenoid biosynthesis; isopentenyl diphosphate biosynthesis via DXP pathway; isopentenyl diphosphate from 1-deoxy-D-xylulose 5-phosphate: step 2/6. In terms of biological role, catalyzes the formation of 4-diphosphocytidyl-2-C-methyl-D-erythritol from CTP and 2-C-methyl-D-erythritol 4-phosphate (MEP). The polypeptide is 2-C-methyl-D-erythritol 4-phosphate cytidylyltransferase (Geobacillus thermodenitrificans (strain NG80-2)).